We begin with the raw amino-acid sequence, 639 residues long: Zinc finger protein ZIC 5 (639 aa).

Disordered regions lie at residues proline 113–arginine 171, histidine 189–histidine 251, proline 323–glycine 355, and proline 379–lysine 409. The span at serine 124–alanine 150 shows a compositional bias: pro residues. Pro residues-rich tracts occupy residues alanine 331–alanine 343 and leucine 385–alanine 401. The segment at histidine 434 to histidine 461 adopts a C2H2-type 1; atypical zinc-finger fold. 3 C2H2-type zinc fingers span residues phenylalanine 467–histidine 491, phenylalanine 497–histidine 521, and tyrosine 527–histidine 551. Residues methionine 548 to glycine 568 form a disordered region. 3 positions are modified to phosphoserine: serine 554, serine 558, and serine 576. The interval alanine 607–histidine 639 is disordered. Residues histidine 612–serine 621 are compositionally biased toward polar residues.

The protein belongs to the GLI C2H2-type zinc-finger protein family.

It localises to the nucleus. In terms of biological role, essential for neural crest development, converting cells from an epidermal fate to a neural crest cell fate. Binds to DNA. The chain is Zinc finger protein ZIC 5 (ZIC5) from Homo sapiens (Human).